The chain runs to 477 residues: Splicing factor 3A subunit 2 (477 aa).

Met1 bears the N-acetylmethionine mark. Residues 1 to 27 (MDFQHRPGGKTGSGGVASSSESNRDRR) are disordered. Lys10 bears the N6-acetyllysine mark. A Matrin-type zinc finger spans residues 54–84 (YECKLCLTLHNNEGSYLAHTQGKKHQTNLAR). At Ser153 the chain carries Phosphoserine. 3 stretches are compositionally biased toward pro residues: residues 217–295 (PPAP…PVVH), 303–323 (PPAP…PVVH), and 331–362 (PPAP…PPPS). Residues 217 to 477 (PPAPPSLPAG…GNIPPPPPTN (261 aa)) are disordered. Residues 379-398 (VHPQAPGVHPTPAVHPQAPG) are compositionally biased toward low complexity. 2 stretches are compositionally biased toward pro residues: residues 399–441 (VHPP…PPGV) and 448–477 (VHPP…PPTN).

The protein belongs to the SF3A2 family. As to quaternary structure, component of the 17S U2 SnRNP complex, a ribonucleoprotein complex that contains small nuclear RNA (snRNA) U2 and a number of specific proteins. Part of the SF3A subcomplex of the 17S U2 SnRNP complex which is composed of three subunits; SF3A3/SAP61, SF3A2/SAP62 and SF3A1/SAP114. SF3A associates with the splicing factor SF3B and a 12S RNA unit to form the mature 17S U2 small nuclear ribonucleoprotein complex (17S U2 snRNP). Identified in the spliceosome 'E' complex, a precursor of the spliceosome 'A' complex. Identified in the spliceosome 'A' and 'B' complexes. Identified in the spliceosome 'C' complex. Interacts with HTATSF1.

Its subcellular location is the nucleus. Functionally, component of the 17S U2 SnRNP complex of the spliceosome, a large ribonucleoprotein complex that removes introns from transcribed pre-mRNAs. The 17S U2 SnRNP complex (1) directly participates in early spliceosome assembly and (2) mediates recognition of the intron branch site during pre-mRNA splicing by promoting the selection of the pre-mRNA branch-site adenosine, the nucleophile for the first step of splicing. Within the 17S U2 SnRNP complex, SF3A2 is part of the SF3A subcomplex that contributes to the assembly of the 17S U2 snRNP, and the subsequent assembly of the pre-spliceosome 'E' complex and the pre-catalytic spliceosome 'A' complex. Involved in pre-mRNA splicing as a component of pre-catalytic spliceosome 'B' complexes, including the Bact complex. Interacts directly with the duplex formed by U2 snRNA and the intron. This is Splicing factor 3A subunit 2 (SF3A2) from Bos taurus (Bovine).